Consider the following 836-residue polypeptide: Transcriptional regulatory protein UME6 (836 aa).

Over residues 1–14 the composition is skewed to basic and acidic residues; that stretch reads MLDKARSQSKHMDE. Disordered stretches follow at residues 1-77, 92-168, 218-332, and 381-464; these read MLDK…IESL, STCA…CNGH, HLPP…DDQC, and NESS…GFFY. 3 stretches are compositionally biased toward polar residues: residues 39-48, 61-77, and 92-112; these read SRATLMNSSQ, GANS…IESL, and STCA…SLKV. Serine 114 is modified (phosphoserine). A compositionally biased stretch (basic and acidic residues) spans 117 to 126; sequence DIKDDPKEND. Residues serine 141, serine 150, and serine 228 each carry the phosphoserine modification. Over residues 226 to 236 the composition is skewed to low complexity; sequence AVSSPGTTAAG. Polar residues predominate over residues 258–272; sequence TSANKNNGKTTNSPM. Residues 273–305 are compositionally biased toward low complexity; it reads SILSRNNSTNNNDNNSIQSSDSRESSNNNEIGG. Phosphoserine occurs at positions 316 and 318. Polar residues predominate over residues 316 to 325; the sequence is SPSNDSQVQH. The span at 381 to 398 shows a compositional bias: low complexity; that stretch reads NESSSNNASSNTDTPTNS. Positions 399 to 414 are enriched in polar residues; sequence RHANTSSSITSRNNFQ. Positions 426–446 are enriched in low complexity; that stretch reads PTSASSFTSTNNNNPQRNNIN. Positions 508-594 are SIN3-binding; sequence NSASSSTKLD…QPIFESNNST (87 aa). Residues 636 to 766 form a disordered region; the sequence is NGKRIDRRLS…ATSSTSQGTR (131 aa). Serine 645 bears the Phosphoserine mark. Polar residues predominate over residues 670–679; that stretch reads VASQTNSDYN. Residues 680-702 show a composition bias toward low complexity; it reads SLGESSTSSAPSSPSLKASSGLA. Residues 718–739 are compositionally biased toward basic residues; the sequence is SKGKNVKPKAKSKAKQSSKKRP. Residues 740–751 show a composition bias toward low complexity; that stretch reads NNTTSKSKANNS. The zn(2)-C6 fungal-type DNA-binding region spans 771–798; the sequence is CWICRLRKKKCTEERPHCFNCERLKLDC.

Component of the RPD3C(L) complex composed of at least ASH1, CTI6, DEP1, PHO23, RPD3, RXT2, RXT3, SAP30, SDS3, SIN3, UME1 and UME6. Interacts with RIM11, MCK1 and IME1. Phosphorylated by RIM11 and MCK1.

The protein localises to the nucleus. In terms of biological role, component of the RPD3C(L) histone deacetylase complex (HDAC) responsible for the deacetylation of lysine residues on the N-terminal part of the core histones (H2A, H2B, H3 and H4). Histone deacetylation gives a tag for epigenetic repression and plays an important role in transcriptional regulation, cell cycle progression and developmental events. Binds to the URS1 site (5'-AGCCGCCGA-3') and recruits the RPD3 histone deacetylase complex to the promoters to negatively regulate the expression of many genes including CAR1 (arginase), several required for sporulation, mating type switching, inositol metabolism, and oxidative carbon metabolism. Also recruits the ISW2 chromatin remodeling complex to promoters in a second gene repression pathway. Associates with the master regulator of meiosis IME1 in order to activate the expression of meiosis genes. Has both a positive and negative role in regulating phospholipid biosynthesis. In Saccharomyces cerevisiae (strain ATCC 204508 / S288c) (Baker's yeast), this protein is Transcriptional regulatory protein UME6 (UME6).